Reading from the N-terminus, the 260-residue chain is Phosphate import ATP-binding protein PstB (260 aa).

An ABC transporter domain is found at 14–255 (IETENLNLFY…PKNTKTEEYI (242 aa)). 46–53 (GPSGCGKS) is an ATP binding site.

Belongs to the ABC transporter superfamily. Phosphate importer (TC 3.A.1.7) family. The complex is composed of two ATP-binding proteins (PstB), two transmembrane proteins (PstC and PstA) and a solute-binding protein (PstS).

The protein resides in the cell inner membrane. It carries out the reaction phosphate(out) + ATP + H2O = ADP + 2 phosphate(in) + H(+). Functionally, part of the ABC transporter complex PstSACB involved in phosphate import. Responsible for energy coupling to the transport system. In Borreliella afzelii (strain PKo) (Borrelia afzelii), this protein is Phosphate import ATP-binding protein PstB.